Here is a 1133-residue protein sequence, read N- to C-terminus: Fas-binding factor 1 (1133 aa).

Disordered regions lie at residues 89–198 (LGLK…TPIR) and 211–544 (IMAT…VPVQ). The segment covering 102-113 (AAKDPGKGELPN) has biased composition (basic and acidic residues). Low complexity predominate over residues 125–134 (KKSLPSPSSS). The residue at position 142 (serine 142) is a Phosphoserine. Residues 165 to 182 (PPVTQSKTASDKSPSTVR) are compositionally biased toward polar residues. Basic and acidic residues-rich tracts occupy residues 221-245 (PKAE…DELL) and 259-276 (TGEH…RPQD). A compositionally biased stretch (acidic residues) spans 277-286 (SEDMWGDEDF). Residues 295–310 (VVSSEGRQSRRQSVSR) are compositionally biased toward low complexity. Residues 325–336 (SKQSPPMASSPI) are compositionally biased toward polar residues. Residues 415 to 424 (ASKEEKEDWL) are compositionally biased toward basic and acidic residues. The segment covering 459–469 (SGSQPLTSTQG) has biased composition (polar residues). Over residues 473 to 482 (AAAGGSSGTT) the composition is skewed to low complexity. Coiled-coil stretches lie at residues 577 to 727 (AELQ…VDAA) and 773 to 870 (IRQR…EEQK). Lysine 960 is covalently cross-linked (Glycyl lysine isopeptide (Lys-Gly) (interchain with G-Cter in SUMO2)). The tract at residues 1062-1085 (AASSQSALMPPAPTTRWCSQPPTG) is disordered.

As to quaternary structure, may interact with FAS cytoplasmic domain. Interacts with PARD3. Interacts with TRAPPC14. In terms of tissue distribution, present in various epithelial cells (at protein level).

The protein resides in the cytoplasm. It is found in the cytoskeleton. Its subcellular location is the microtubule organizing center. It localises to the centrosome. The protein localises to the centriole. The protein resides in the spindle pole. It is found in the cell junction. In terms of biological role, keratin-binding protein required for epithelial cell polarization. Involved in apical junction complex (AJC) assembly via its interaction with PARD3. Required for ciliogenesis. In Homo sapiens (Human), this protein is Fas-binding factor 1 (FBF1).